A 598-amino-acid chain; its full sequence is Nuclear receptor subfamily 4immunitygroup A member 1 (598 aa).

Disordered stretches follow at residues 1–44 (MPCI…EAAP), 131–158 (YYGS…DGSF), 177–206 (LPKA…AQSP), and 221–265 (GESY…GSEG). Residues 134–145 (SPCSAPSPSTPS) are compositionally biased toward low complexity. The tract at residues 171–466 (RAWTEQLPKA…PGEGKLIFCS (296 aa)) is required for nuclear import. Positions 264–339 (EGRCAVCGDN…VGMVKEVVRT (76 aa)) form a DNA-binding region, nuclear receptor. 2 NR C4-type zinc fingers span residues 267–287 (CAVC…CEGC) and 303–327 (CLAN…FQKC). The tract at residues 268-354 (AVCGDNASCQ…RRGRLPSKPK (87 aa)) is required for binding NBRE-containing DNA. A required for the interaction with RXRA region spans residues 299-361 (AKYICLANKD…KPKQPPDASP (63 aa)). Ser-341 carries the post-translational modification Phosphoserine; by PKA. Positions 341–361 (SLKGRRGRLPSKPKQPPDASP) are disordered. At Ser-351 the chain carries Phosphoserine. The 236-residue stretch at 360–595 (SPANLLTSLV…PIIDKIFMDT (236 aa)) folds into the NR LBD domain. The tract at residues 521–544 (PRRVEELQNRIASCLKEHVAAVAG) is binds lipopolysaccharide. The segment at 584–595 (PPPIIDKIFMDT) is AF-2.

The protein belongs to the nuclear hormone receptor family. NR4 subfamily. As to quaternary structure, binds the NGFI-B response element (NBRE) as a monomer. Binds the Nur response element (NurRE), consisting of two inverse NBRE-related octanucleotide repeats separated by 6 base-pairs, as a dimer. Interacts (via N-terminus) with NLRP3 (via LRR repeat domain); the interaction is direct, requires binding of NR4A1/Nur77 to NBRE-containing dsDNA and lipopolysaccharide, and leads to non-canonical NLRP3 inflammasome activation. Interacts with GADD45GIP1. Interacts with STK11. Interacts with IFI27. Heterodimer (via DNA-binding domain) with RXRA (via C-terminus); DNA-binding of the heterodimer is enhanced by 9-cis retinoic acid. Competes for the RXRA interaction with EP300 and thereby attenuates EP300 mediated acetylation of RXRA. Interacts with NCOA1. Interacts with NCOA2. Interacts with NCOA3. The cofactor is Zn(2+). Post-translationally, phosphorylated at Ser-351 by RPS6KA1 and RPS6KA3 in response to mitogenic or stress stimuli. Acetylated by p300/CBP, acetylation increases stability. Deacetylated by HDAC1. Fetal muscle and adult liver, brain and thyroid.

Its subcellular location is the nucleus. The protein resides in the cytoplasm. It localises to the cytosol. The protein localises to the mitochondrion. With respect to regulation, its transcription factor activity is activated by binding cytosporone B (Csn-B) via its ligand-binding (NR LBD) domain and stimulates recruitment of coactivators NCOA1 and NCOA2, but not NCOA3, to promoters. Csn-B-binding is also accompanied by its translocation to the mitochondrion. Its transcription factor activity is activated by corticotropin-releasing hormone (CRH) and forskolin. Not activated by binding cytosporone C (Csn-C). In terms of biological role, orphan nuclear receptor. Binds the NGFI-B response element (NBRE) 5'-AAAGGTCA-3'. Binds 9-cis-retinoic acid outside of its ligand-binding (NR LBD) domain. Participates in energy homeostasis by sequestrating the kinase STK11 in the nucleus, thereby attenuating cytoplasmic AMPK activation. Regulates the inflammatory response in macrophages by regulating metabolic adaptations during inflammation, including repressing the transcription of genes involved in the citric acid cycle (TCA). Inhibits NF-kappa-B signaling by binding to low-affinity NF-kappa-B binding sites, such as at the IL2 promoter. May act concomitantly with NR4A2 in regulating the expression of delayed-early genes during liver regeneration. Plays a role in the vascular response to injury. In the cytosol, upon its detection of both bacterial lipopolysaccharide (LPS) and NBRE-containing mitochondrial DNA released by GSDMD pores during pyroptosis, it promotes non-canonical NLRP3 inflammasome activation by stimulating association of NLRP3 and NEK7. This is Nuclear receptor subfamily 4immunitygroup A member 1 (NR4A1) from Homo sapiens (Human).